The sequence spans 414 residues: Phospholipid-transporting ATPase accessory subunit LEM3 (414 aa).

A required for localization to the plasma membrane region spans residues 1-50 (MVNFDLGQVGEVFRRKDKGAIVSGDNPEEEEDVDASEFEEDEVKPVRTKN). The Cytoplasmic portion of the chain corresponds to 1–74 (MVNFDLGQVG…AINPVLTPRT (74 aa)). The disordered stretch occupies residues 20-52 (AIVSGDNPEEEEDVDASEFEEDEVKPVRTKNRR). Over residues 26–42 (NPEEEEDVDASEFEEDE) the composition is skewed to acidic residues. Phosphoserine is present on serine 36. A helical transmembrane segment spans residues 75–95 (VLPLYLLIAVVFVIVGGCILA). Over 96 to 372 (QNSKVDEVTI…HGSHLGGRNP (277 aa)) the chain is Extracellular. Cystine bridges form between cysteine 110/cysteine 159 and cysteine 216/cysteine 231. Residue asparagine 113 is glycosylated (N-linked (GlcNAc...) asparagine). N-linked (GlcNAc...) asparagine glycans are attached at residues asparagine 240, asparagine 256, asparagine 279, asparagine 298, and asparagine 332. The chain crosses the membrane as a helical span at residues 373–393 (FLGIVYLIGGCICAAMALILL). The Cytoplasmic portion of the chain corresponds to 394–414 (TFWLFGGRKIADASSLSWNMK). The required for localization to the plasma membrane stretch occupies residues 400-414 (GRKIADASSLSWNMK).

Belongs to the CDC50/LEM3 family. Component of a flippase complex consisting of DNF1 or DNF2 and LEM3. Interacts with DNF1; the interaction is direct and required for their mutual export from the endoplasmic reticulum. Interacts with DNF2; the interaction is direct and required for their mutual export from the endoplasmic reticulum.

The protein localises to the cell membrane. Its function is as follows. Accessory component of a P4-ATPase flippase complex which catalyzes the hydrolysis of ATP coupled to the transport of glucosylceramide, phosphatidylcholine, phosphatidylethanolamine, and small amounts of phosphatidylserine from the lumenal to the cytosolic leaflet of the cell membrane and ensures the maintenance of asymmetric distribution of phospholipids. Contributes to substrate binding and specificity of the P4-ATPase catalytic subunit. In Saccharomyces cerevisiae (strain ATCC 204508 / S288c) (Baker's yeast), this protein is Phospholipid-transporting ATPase accessory subunit LEM3.